We begin with the raw amino-acid sequence, 746 residues long: Actin filament-associated protein 1-like 1 (746 aa).

The tract at residues 88 to 206 (EDQKKEPEAN…RLTHQWPSEE (119 aa)) is disordered. The segment covering 98 to 107 (HTVTKPSKTD) has biased composition (polar residues). Residues 108 to 119 (SPPPLPNTPPPE) are compositionally biased toward pro residues. Residues 139–148 (SRSSSSPPNS) are compositionally biased toward low complexity. The region spanning 214 to 310 (DCHICAFLLR…WLHVVRDVTG (97 aa)) is the PH 1 domain. The interval 336-371 (EKQTSDSDSMPSGESARDIRENGKPKRGALSELTGT) is disordered. Residues 350–359 (SARDIRENGK) show a composition bias toward basic and acidic residues. The region spanning 406 to 497 (RCGYVGVLVN…WLGVLLAETG (92 aa)) is the PH 2 domain. Disordered stretches follow at residues 539–596 (EVPF…TRAQ) and 723–746 (PSIY…KKGT). A compositionally biased stretch (polar residues) spans 562–575 (SFSSSDTGKPSPQI). Residues 591–682 (GKTRAQEDAR…VKENLKKSLA (92 aa)) adopt a coiled-coil conformation. Positions 736-746 (KAKEWESKKGT) are enriched in basic and acidic residues.

Its subcellular location is the cytoplasm. It is found in the cell projection. The protein resides in the podosome. It localises to the invadopodium. The protein localises to the cytoskeleton. Its subcellular location is the stress fiber. Functionally, may be involved in podosome and invadosome formation. This is Actin filament-associated protein 1-like 1 (afap1l1) from Danio rerio (Zebrafish).